Here is a 702-residue protein sequence, read N- to C-terminus: Polyribonucleotide nucleotidyltransferase (702 aa).

Residues Asp-485 and Asp-491 each contribute to the Mg(2+) site. Positions 552-612 (PRTEIICIDP…EGVKKAISII (61 aa)) constitute a KH domain. An S1 motif domain is found at 622–690 (GEIYLGKVTK…NQGRINLSRK (69 aa)).

It belongs to the polyribonucleotide nucleotidyltransferase family. Mg(2+) serves as cofactor.

It localises to the cytoplasm. The catalysed reaction is RNA(n+1) + phosphate = RNA(n) + a ribonucleoside 5'-diphosphate. In terms of biological role, involved in mRNA degradation. Catalyzes the phosphorolysis of single-stranded polyribonucleotides processively in the 3'- to 5'-direction. This chain is Polyribonucleotide nucleotidyltransferase, found in Clostridium botulinum (strain 657 / Type Ba4).